The following is a 940-amino-acid chain: MASVLEKVLRVGEGRTLRKLQNYAKAVNQLEEDFTHLTDEELKNETVELRERHANGESLDDLLPEAFAAVREASRRTLGLRHFDVQIMGGAALHLGNIAEMKTGEGKTLVATLPAYLNAIASRGVHVITVNDYLASYQSELMGRVFRALGMTTGVILAGQTPQQRREQYAADITYGTNNEFGFDYLRDNMAWQASDMVQRGHFFAVVDEVDSILIDEARTPLIISGPSAGDANRWFTEFANVAKRLVPEVDYEVDEKKRTVGVLETGIEKVEDHLGIDNLYESANTPLISFLNNSIKAKALFKKDKDYVVMNGEVLIVDEHTGRILMGRRYNEGIHQAIEAKEGVAVKAENQTLATVTLQNYFRLYKKLSGMTGTAETEAAEFMSTYKLGVVPIPTNRPMQRKDQSDLIYKNEKAKFEQVVEDIAERHAAGQPVLVGTTSVEKSEYLSKLLAKKGVRHEVLNAKNHAREAAIVAQAGHLGSVTVATNMAGRGTDIMLGGNAEFLAVAAMNARGLSPVETPEQYETEWDDVFAQVKAEVDEEAAKVIEAGGLYVLGTERHESRRIDNQLRGRSGRQGDPGESRFYLSLTDDLMRLFNNGAAASLMGRDSVPDDVAIESKVVSRAIRSAQGQVEARNAEIRKNVLKYDDVLNRQREAIYGDRRHILEGDDLQERSQRFLEAVIDDVLDSHIGEGNGDDWDFDALWTELKTLYPISITIDEVITEAGSKGRVNRDFVRREILSDAKLAYSKREEQLGEAAMRELERRVVLSVIDRRWREHLYEMDYLKDGIGLRAMAQRDPLVEYQREGFALFQQMMGAIREETVGFLFNLEVEVQAPADAESVGPRIQAKGLAANQATADKLRYTAPTDDGGVEVRNQRGQIEKAATAKAQKDQQAEDAVLVGEDEPETPQGPPARGAFGQPTGASSAPQNREERRKADRRK.

ATP contacts are provided by residues Gln86, 104-108 (GEGKT), and Asp494. The interval 884 to 940 (ATAKAQKDQQAEDAVLVGEDEPETPQGPPARGAFGQPTGASSAPQNREERRKADRRK) is disordered. Over residues 929-940 (NREERRKADRRK) the composition is skewed to basic and acidic residues.

This sequence belongs to the SecA family. In terms of assembly, monomer and homodimer. Part of the essential Sec protein translocation apparatus which comprises SecA, SecYEG and auxiliary proteins SecDF. Other proteins may also be involved.

It localises to the cell membrane. The protein localises to the cytoplasm. The enzyme catalyses ATP + H2O + cellular proteinSide 1 = ADP + phosphate + cellular proteinSide 2.. Functionally, part of the Sec protein translocase complex. Interacts with the SecYEG preprotein conducting channel. Has a central role in coupling the hydrolysis of ATP to the transfer of proteins into and across the cell membrane, serving as an ATP-driven molecular motor driving the stepwise translocation of polypeptide chains across the membrane. The polypeptide is Protein translocase subunit SecA (Clavibacter sepedonicus (Clavibacter michiganensis subsp. sepedonicus)).